The primary structure comprises 252 residues: Transcription factor bHLH117 (252 aa).

Positions 103-141 are disordered; that stretch reads LFPSLSPPLPAAKRQKLNSTSSSTTSGSPTASNDGGIIT. The span at 121–134 shows a compositional bias: low complexity; it reads STSSSTTSGSPTAS. Residues 130–179 enclose the bHLH domain; it reads SPTASNDGGIITKRRKISDKIRSLEKLMPWERKMNLAMTLEESHKYIKFL.

In terms of assembly, homodimer.

The protein localises to the nucleus. The sequence is that of Transcription factor bHLH117 (BHLH117) from Arabidopsis thaliana (Mouse-ear cress).